We begin with the raw amino-acid sequence, 154 residues long: S-protein homolog 12 (154 aa).

The N-terminal stretch at 1–30 (MGTNKIPKTLNGNLVLILIITIMMVTHSHG) is a signal peptide.

The protein belongs to the plant self-incompatibility (S1) protein family.

Its subcellular location is the secreted. This chain is S-protein homolog 12, found in Arabidopsis thaliana (Mouse-ear cress).